A 383-amino-acid chain; its full sequence is Na(+)/H(+) antiporter NhaA (383 aa).

The next 11 helical transmembrane spans lie at 10–30 (LIGG…NNSP), 56–76 (LMHW…GLEI), 91–111 (IITP…IYLS), 121–141 (GWAI…ALLG), 150–170 (LLVI…IAIF), 174–194 (SLSL…IICN), 206–226 (VVLG…ATLA), 254–274 (PWII…ISFS), 289–308 (IIWG…LAVF), 327–347 (GISL…VLAF), and 355–375 (AIKI…YIVL).

It belongs to the NhaA Na(+)/H(+) (TC 2.A.33) antiporter family.

Its subcellular location is the cell inner membrane. The catalysed reaction is Na(+)(in) + 2 H(+)(out) = Na(+)(out) + 2 H(+)(in). Na(+)/H(+) antiporter that extrudes sodium in exchange for external protons. The polypeptide is Na(+)/H(+) antiporter NhaA (Francisella tularensis subsp. holarctica (strain FTNF002-00 / FTA)).